The chain runs to 194 residues: Imidazoleglycerol-phosphate dehydratase (194 aa).

Belongs to the imidazoleglycerol-phosphate dehydratase family.

It is found in the cytoplasm. The enzyme catalyses D-erythro-1-(imidazol-4-yl)glycerol 3-phosphate = 3-(imidazol-4-yl)-2-oxopropyl phosphate + H2O. It functions in the pathway amino-acid biosynthesis; L-histidine biosynthesis; L-histidine from 5-phospho-alpha-D-ribose 1-diphosphate: step 6/9. This Listeria welshimeri serovar 6b (strain ATCC 35897 / DSM 20650 / CCUG 15529 / CIP 8149 / NCTC 11857 / SLCC 5334 / V8) protein is Imidazoleglycerol-phosphate dehydratase.